A 634-amino-acid chain; its full sequence is Chaperone protein DnaK (634 aa).

The residue at position 198 (Thr-198) is a Phosphothreonine; by autocatalysis. The segment at 599-634 is disordered; it reads KQTQEGAEAASEAGEQSAGDEGVVDAEFEEVDEQNK. The span at 602 to 619 shows a compositional bias: low complexity; the sequence is QEGAEAASEAGEQSAGDE. The span at 620–634 shows a compositional bias: acidic residues; the sequence is GVVDAEFEEVDEQNK.

Belongs to the heat shock protein 70 family.

Its function is as follows. Acts as a chaperone. This chain is Chaperone protein DnaK, found in Syntrophotalea carbinolica (strain DSM 2380 / NBRC 103641 / GraBd1) (Pelobacter carbinolicus).